Consider the following 1109-residue polypeptide: MAGRGGRDPRRGYDGGYGYPRGGGGQGGTNRGRDGQRGGGRNGPRGGRFPGGRGVEPRRGGDVLGGGQGGGRGTTAGAGGLVRGGSELAVGAELRRRVPTCHVNDFPELGIGGTPVLVRRWRPRDHRDQHDHQSQRHHHRHHHHQRQRHHHHHQRQQRRGSRTRDPRVRRGPLRIPYGEDEKEEPPATPIASSNKNKREEPPTKHRPMARPPGGGGPLSKGEVKLLVNHFSVDYPKESTFFHYEIRIKLGDGPNRKLSKAELLTVKNELFEHESLQELSSAVAYDGERNLYTCAELPEDCIVPVSKFRVKDSSRTYIVSVKLKKPLPLSQLLEQRPGPRDVMQGLDVIVREASSFGKIVLGQGFYPQSGSEAISDSNIVALKGTQQSLKCTQKGLILCVDYSVLPCWKAGSVLDLVKTMKFMEYPLLEDQLKKLNNALKGLCVTVSHRKTEEKYTVKGLTDKPADQITFKDSKSGQTTKLIEYYKETYKKEIEHPMLPCLDLSKSKSKQNYVPIEFCNIPEGERYPVARLDDKKSDNKGEQEKPSTKTTLRKISIKVASSRKEEILDLVGNAQDGPCRGKIAQRFRISLDAAMMEVTGRILAPPTLELGTGTSRGQTFKFTIHQDDCQWNWKLKKYDKRVVAHGGTLNCWGVVDFSEGDLESKFIDKVVRKCSALGMVMTRKPCYEHVSNMEVLSDPKSLRDALIEAKRAAEEEDKKLQLLFCPMLNRCHGYKTLKLMCETELGIQTQCFLSTAAKLDEKRQDQYITNLALKINGKIGGSNMQLDPDSIPVVSAKDFMFIGADVNHPPPGNVSKDIPSIAAVVASVDKGASKYVTRIRAQYHRCEMIQNLGDICKELIGAYEKVNKKKPDSIIYFRDGVSDGQFDMVLNEELADMENKIMVGDYPKITVIVAKKRHHTRLFPKDRNQRQTKNGNVLPGTVVDTDVVDPTAYDFYLCSHKGEVGTSRPTHYYSLLDEHGFASDDLQKLVYNLCFVFARCTKPVSLATPVYYADLAAYRGRLYYEGMMMLQPAASAASASEAMMPAAQPQAAAAAAAAASPSSSAASSSEGMTASQPQAPAAEAASSSAGAADFRELPPMHGDLLNNMFFL.

A compositionally biased stretch (basic and acidic residues) spans 1–13; it reads MAGRGGRDPRRGY. Disordered stretches follow at residues 1-83 and 125-220; these read MAGR…GLVR and DHRD…PLSK. Gly residues-rich tracts occupy residues 14 to 30, 37 to 54, and 62 to 83; these read DGGY…GGTN, RGGG…GGRG, and DVLG…GLVR. Residues 125–134 are compositionally biased toward basic and acidic residues; that stretch reads DHRDQHDHQS. Over residues 135–161 the composition is skewed to basic residues; sequence QRHHHRHHHHQRQRHHHHHQRQQRRGS. Residues 411–521 form the PAZ domain; sequence SVLDLVKTMK…VPIEFCNIPE (111 aa). Positions 527 to 545 are enriched in basic and acidic residues; that stretch reads VARLDDKKSDNKGEQEKPS. The tract at residues 527–548 is disordered; it reads VARLDDKKSDNKGEQEKPSTKT. Residues 720-1023 enclose the Piwi domain; it reads LLFCPMLNRC…AAYRGRLYYE (304 aa).

It belongs to the argonaute family. Ago subfamily.

Probably involved in the RNA silencing pathway. May bind to short RNAs such as microRNAs (miRNAs) or short interfering RNAs (siRNAs), and represses the translation of mRNAs which are complementary to them. This Oryza sativa subsp. japonica (Rice) protein is Protein argonaute 3 (AGO3).